Here is a 327-residue protein sequence, read N- to C-terminus: tRNA U34 carboxymethyltransferase (327 aa).

Carboxy-S-adenosyl-L-methionine contacts are provided by residues Lys-91, Trp-105, Lys-110, Gly-130, 181 to 182 (IE), Met-196, Tyr-200, and Arg-315.

This sequence belongs to the class I-like SAM-binding methyltransferase superfamily. CmoB family. As to quaternary structure, homotetramer.

It carries out the reaction carboxy-S-adenosyl-L-methionine + 5-hydroxyuridine(34) in tRNA = 5-carboxymethoxyuridine(34) in tRNA + S-adenosyl-L-homocysteine + H(+). In terms of biological role, catalyzes carboxymethyl transfer from carboxy-S-adenosyl-L-methionine (Cx-SAM) to 5-hydroxyuridine (ho5U) to form 5-carboxymethoxyuridine (cmo5U) at position 34 in tRNAs. This is tRNA U34 carboxymethyltransferase from Pectobacterium atrosepticum (strain SCRI 1043 / ATCC BAA-672) (Erwinia carotovora subsp. atroseptica).